A 723-amino-acid polypeptide reads, in one-letter code: Nicastrin (723 aa).

A signal peptide spans 1-16 (MKKWLVIVLIIAGIRC). Residues 17–678 (DGFSDQVFRT…ESVNLYLMED (662 aa)) are Extracellular-facing. Residues asparagine 40, asparagine 181, asparagine 271, asparagine 328, asparagine 409, and asparagine 627 are each glycosylated (N-linked (GlcNAc...) asparagine). The helical transmembrane segment at 679–699 (ASFEYTMILIAVISALLSIFA) threads the bilayer. At 700-723 (VGRCSETTFIVDEGEPAAEGGEPL) the chain is on the cytoplasmic side.

The protein belongs to the nicastrin family. In terms of assembly, component of the gamma-secretase complex, a complex probably composed of the presenilin homodimer (sel-12, hop-1 or spe-4), nicastrin (aph-2), aph-1 and pen-2.

Its subcellular location is the membrane. In terms of biological role, essential subunit of the gamma-secretase complex, an endoprotease complex that catalyzes the intramembrane cleavage of integral membrane proteins such as Notch (glp-1 or lin-12). It may represents a stabilizing cofactor required for the assembly of the gamma-secretase complex. This Caenorhabditis elegans protein is Nicastrin (aph-2).